The chain runs to 239 residues: Small ribosomal subunit protein uS3 (239 aa).

The region spanning 39–107 (VRQVLRKKMS…PVHINVIEVR (69 aa)) is the KH type-2 domain. Residues 214-239 (SQEKQDDGSRGDRNADRSSRRSREVR) form a disordered region. Residues 216–239 (EKQDDGSRGDRNADRSSRRSREVR) are compositionally biased toward basic and acidic residues.

It belongs to the universal ribosomal protein uS3 family. As to quaternary structure, part of the 30S ribosomal subunit. Forms a tight complex with proteins S10 and S14.

Functionally, binds the lower part of the 30S subunit head. Binds mRNA in the 70S ribosome, positioning it for translation. In Xylella fastidiosa (strain M23), this protein is Small ribosomal subunit protein uS3.